Reading from the N-terminus, the 237-residue chain is BTB/POZ domain-containing protein KCTD6 (237 aa).

The interval Met-1–Cys-104 is interaction with ANK1 isoform Mu17. The tract at residues Met-10–Pro-110 is interaction with CUL3. Residues Asp-12–Leu-81 form the BTB domain. The interval Pro-113–Glu-187 is interaction with USP21.

As to quaternary structure, homopentamer. Interacts with KCTD11; KCTD6 and KCTD11 may associate in pentameric assemblies. Interacts (via BTB domain) with CUL3; initially a 4:4 stoichiometry has been reported, however, electron microscopy revealed pentameric states with a five-pointed pinwheel shape. The interaction with CUL3 is indicative for a participation in a BCR (BTB-CUL3-RBX1) E3 ubiquitin-protein ligase complex. Interacts with HDAC1; probably indirect as the interaction is requires the presence of KCTD11. Interacts with USP21 (preferentially catalytic inactive form). Interacts with ANK1 isoform Mu17; detected in striated muscle. Interacts with USP11. Highly expressed in cerebellum and brain. Expression is down-regulated in medulloblastoma.

The protein localises to the cytoplasm. Its subcellular location is the myofibril. It is found in the sarcomere. The protein resides in the m line. It functions in the pathway protein modification; protein ubiquitination. Functionally, probable substrate-specific adapter of a BCR (BTB-CUL3-RBX1) E3 ubiquitin-protein ligase complex mediating the ubiquitination and subsequent proteasomal degradation of target proteins. Promotes the ubiquitination of HDAC1; the function seems to depend on KCTD11:KCTD6 oligomerization. Can function as antagonist of the Hedgehog pathway by affecting the nuclear transfer of transcription factor GLI1; the function probably occurs via HDAC1 down-regulation, keeping GLI1 acetylated and inactive. Inhibits cell growth and tumorigenicity of medulloblastoma (MDB). Involved in regulating protein levels of ANK1 isoform Mu17 probably implicating CUL3-dependent proteasomal degradation. The chain is BTB/POZ domain-containing protein KCTD6 (KCTD6) from Homo sapiens (Human).